The following is a 253-amino-acid chain: Phosphate import ATP-binding protein PstB (253 aa).

The 242-residue stretch at 7–248 folds into the ABC transporter domain; it reads MHSKGLDFFY…PGNKQTEDYI (242 aa). Residue 39 to 46 coordinates ATP; it reads GPSGCGKS.

This sequence belongs to the ABC transporter superfamily. Phosphate importer (TC 3.A.1.7) family. As to quaternary structure, the complex is composed of two ATP-binding proteins (PstB), two transmembrane proteins (PstC and PstA) and a solute-binding protein (PstS).

The protein resides in the cell inner membrane. The catalysed reaction is phosphate(out) + ATP + H2O = ADP + 2 phosphate(in) + H(+). Functionally, part of the ABC transporter complex PstSACB involved in phosphate import. Responsible for energy coupling to the transport system. The chain is Phosphate import ATP-binding protein PstB from Oleidesulfovibrio alaskensis (strain ATCC BAA-1058 / DSM 17464 / G20) (Desulfovibrio alaskensis).